The primary structure comprises 273 residues: Phosphate import ATP-binding protein PstB (273 aa).

The ABC transporter domain maps to 19–258; the sequence is LSLQNVTISY…FNDTDKIFNA (240 aa). Residue 51–58 coordinates ATP; it reads GPSGCGKS.

This sequence belongs to the ABC transporter superfamily. Phosphate importer (TC 3.A.1.7) family. The complex is composed of two ATP-binding proteins (PstB), two transmembrane proteins (PstC and PstA) and a solute-binding protein (PstS).

Its subcellular location is the cell inner membrane. It catalyses the reaction phosphate(out) + ATP + H2O = ADP + 2 phosphate(in) + H(+). Part of the ABC transporter complex PstSACB involved in phosphate import. Responsible for energy coupling to the transport system. This Synechococcus sp. (strain CC9605) protein is Phosphate import ATP-binding protein PstB.